We begin with the raw amino-acid sequence, 367 residues long: Cytochrome b (367 aa).

Helical transmembrane passes span 25–45, 69–90, 105–125, and 170–190; these read FGSM…FLAI, WIMQ…YIHI, WLSG…GYVL, and FFAL…IHII. Residues His-75 and His-89 each coordinate heme b. Heme b-binding residues include His-174 and His-188. Position 193 (His-193) interacts with a ubiquinone. Transmembrane regions (helical) follow at residues 218 to 238, 280 to 300, 312 to 332, and 339 to 358; these read YKDV…MSFT, LGGT…PFTH, LTQA…WTAT, and FIFI…IINP.

Belongs to the cytochrome b family. As to quaternary structure, the cytochrome bc1 complex contains 3 respiratory subunits (MT-CYB, CYC1 and UQCRFS1), 2 core proteins (UQCRC1 and UQCRC2) and probably 6 low-molecular weight proteins. Heme b serves as cofactor.

Its subcellular location is the mitochondrion inner membrane. Functionally, component of the ubiquinol-cytochrome c reductase complex (complex III or cytochrome b-c1 complex) that is part of the mitochondrial respiratory chain. The b-c1 complex mediates electron transfer from ubiquinol to cytochrome c. Contributes to the generation of a proton gradient across the mitochondrial membrane that is then used for ATP synthesis. This Austrelaps superbus (Lowland copperhead snake) protein is Cytochrome b (MT-CYB).